We begin with the raw amino-acid sequence, 286 residues long: Putative L-ribulose-5-phosphate 3-epimerase SgbU (286 aa).

Belongs to the L-ribulose-5-phosphate 3-epimerase family.

The enzyme catalyses L-ribulose 5-phosphate = L-xylulose 5-phosphate. Functionally, catalyzes the isomerization of L-xylulose-5-phosphate to L-ribulose-5-phosphate. In Haemophilus influenzae (strain ATCC 51907 / DSM 11121 / KW20 / Rd), this protein is Putative L-ribulose-5-phosphate 3-epimerase SgbU (sgbU).